The sequence spans 457 residues: Prenyltransferase ucdE (457 aa).

Dimethylallyl diphosphate is bound by residues Arg106, Lys198, Lys277, Tyr279, Tyr382, Tyr447, and Tyr451.

It belongs to the tryptophan dimethylallyltransferase family.

It functions in the pathway secondary metabolite biosynthesis. Nonribosomal peptide synthetase that mediates the biosynthesis of usterphenyllins and uscandidusins, p-terphenyl derivatives. Within the pathway, ucdE prenylates position C-5 of ring A of 3,15-dihydroxyterphenyllin to produce forms usterphenyllin B. UcdE further prenylates position C-14 of ring C of usterphenyllin B to form usterphenyllin A. The pathway begin with the biosynthesis of 4-hydroxyphenylpyruvate (HPPA) from L-tyrosine, possibly by the aminotransferase ucdG. The nonribosomal peptide synthetase ucdA then condenses two HPPA units to produce atromentin. The key step in this pathway is the reduction and dehydration of atromentin to form a terphenyl triol intermediate, performed by the NAD-dependent dehydrogenase ucdB. Further O-methylation by the methyltransferase ucdC forms terphenyllin carrying two methoxy moieties at C-9 and C-12, and subsequent dihydroxylation at C-3 of ring A and C-15 of ring C by the flavin-dependent oxygenase ucdD leads to 3,15-dihydroxyterphenyllin. Prenylation by ucdE at position C-5 of ring A forms usterphenyllin B, and is followed by a second prenylation at position C-14 of ring C to form usterphenyllin A. The following furan ring formation that leads to uscandidusins A and B was proven to be an unexpected spontaneous non-enzymatic reaction. The sequence is that of Prenyltransferase ucdE from Aspergillus ustus.